A 94-amino-acid polypeptide reads, in one-letter code: AVTCTVVTKALGPCMTYLKGTGATPPPANCCAGVRSLKAAAQTVADRRMACNCMKSAAQKTKSLNYKVAARLASQCGVRMSYSVSPNVNCNSVQ.

4 cysteine pairs are disulfide-bonded: C4-C53, C14-C30, C31-C76, and C51-C90.

Its function is as follows. Plant non-specific lipid-transfer proteins transfer phospholipids as well as galactolipids across membranes. May play a role in wax or cutin deposition in the cell walls of expanding epidermal cells and certain secretory tissues. The sequence is that of Non-specific lipid-transfer protein 1 from Amaranthus hypochondriacus (Prince-of-Wales feather).